The primary structure comprises 193 residues: Ion-translocating oxidoreductase complex subunit A (193 aa).

6 helical membrane passes run 5–25 (LLIL…FLGL), 38–58 (AMGM…CSYL), 65–85 (APLG…AVVV), 102–122 (VLGI…VALL), 134–154 (ILYG…FSAM), and 171–191 (AIGM…TGLV).

This sequence belongs to the NqrDE/RnfAE family. As to quaternary structure, the complex is composed of six subunits: RnfA, RnfB, RnfC, RnfD, RnfE and RnfG.

Its subcellular location is the cell inner membrane. Part of a membrane-bound complex that couples electron transfer with translocation of ions across the membrane. The chain is Ion-translocating oxidoreductase complex subunit A from Hahella chejuensis (strain KCTC 2396).